A 676-amino-acid polypeptide reads, in one-letter code: Envelope glycoprotein (676 aa).

Residues 1–34 (MACSTLSKSPKDKIDPRDLLIPLILFLSLKGARS) form the signal peptide. The receptor-binding domain (RBD) stretch occupies residues 35 to 270 (AAPGSSPHQV…SYQNLGPRIP (236 aa)). Topologically, residues 35–620 (AAPGSSPHQV…FNRSPWFTTL (586 aa)) are extracellular. Residue asparagine 46 is glycosylated (N-linked (GlcNAc...) asparagine; by host). Cystine bridges form between cysteine 80–cysteine 132, cysteine 106–cysteine 121, cysteine 107–cysteine 117, cysteine 155–cysteine 175, and cysteine 167–cysteine 180. Histidine 89 lines the Zn(2+) pocket. Residue aspartate 120 participates in Zn(2+) binding. N-linked (GlcNAc...) asparagine; by host glycosylation is present at asparagine 202. A disulfide bond links cysteine 212 and cysteine 218. Positions 287–321 (NPLPKPAKSPPASSSTPTLISPSPTPTQPPPAGTG) are disordered. Residues 296 to 308 (PPASSSTPTLISP) show a composition bias toward low complexity. Over residues 309-318 (SPTPTQPPPA) the composition is skewed to pro residues. N-linked (GlcNAc...) asparagine; by host glycosylation is present at asparagine 336. 6 cysteine pairs are disulfide-bonded: cysteine 346–cysteine 349, cysteine 346–cysteine 573, cysteine 376–cysteine 430, cysteine 395–cysteine 407, cysteine 437–cysteine 450, and cysteine 565–cysteine 572. A CXXC motif is present at residues 346 to 349 (CWLC). 2 N-linked (GlcNAc...) asparagine; by host glycosylation sites follow: asparagine 368 and asparagine 375. Residues asparagine 408 and asparagine 444 are each glycosylated (N-linked (GlcNAc...) asparagine; by host). Residues 482 to 502 (VSLTLALLLGGLTMGGIAAGV) are fusion peptide. Residues 513–547 (QQFQQLHAAVQDDLKEVEKSITNLEKSLTSLSEVV) adopt a coiled-coil conformation. The segment at 548-564 (LQNRRGLDLLFLKEGGL) is immunosuppression. The CX6CC signature appears at 565-573 (CAALKEECC). A helical membrane pass occupies residues 621–641 (ISTIMGPLIILLLILLFGPCI). The S-palmitoyl cysteine; by host moiety is linked to residue cysteine 640. Residues 642-676 (LNRLVQFVKDRISVVQALVLTQQYHQLKPLEYEPQ) are Cytoplasmic-facing. Positions 665–668 (YHQL) match the YXXL motif; contains endocytosis signal motif.

In terms of assembly, the mature envelope protein (Env) consists of a trimer of SU-TM heterodimers attached by a labile interchain disulfide bond. Post-translationally, specific enzymatic cleavages in vivo yield mature proteins. Envelope glycoproteins are synthesized as an inactive precursor that is N-glycosylated and processed likely by host cell furin or by a furin-like protease in the Golgi to yield the mature SU and TM proteins. The cleavage site between SU and TM requires the minimal sequence [KR]-X-[KR]-R. The R-peptide is released from the C-terminus of the cytoplasmic tail of the TM protein upon particle formation as a result of proteolytic cleavage by the viral protease. Cleavage of this peptide is required for TM to become fusogenic. In terms of processing, the CXXC motif is highly conserved across a broad range of retroviral envelope proteins. It is thought to participate in the formation of a labile disulfide bond possibly with the CX6CC motif present in the transmembrane protein. Isomerization of the intersubunit disulfide bond to an SU intrachain disulfide bond is thought to occur upon receptor recognition in order to allow membrane fusion. The transmembrane protein is palmitoylated. Post-translationally, the R-peptide is palmitoylated.

The protein resides in the virion membrane. Its subcellular location is the host cell membrane. Its function is as follows. The surface protein (SU) attaches the virus to the host cell by binding to its receptor. This interaction triggers the refolding of the transmembrane protein (TM) and is thought to activate its fusogenic potential by unmasking its fusion peptide. Fusion occurs at the host cell plasma membrane. Functionally, the transmembrane protein (TM) acts as a class I viral fusion protein. Under the current model, the protein has at least 3 conformational states: pre-fusion native state, pre-hairpin intermediate state, and post-fusion hairpin state. During viral and target cell membrane fusion, the coiled coil regions (heptad repeats) assume a trimer-of-hairpins structure, positioning the fusion peptide in close proximity to the C-terminal region of the ectodomain. The formation of this structure appears to drive apposition and subsequent fusion of viral and target cell membranes. Membranes fusion leads to delivery of the nucleocapsid into the cytoplasm. This Friend murine leukemia virus (isolate FB29) (FrMLV) protein is Envelope glycoprotein (env).